The sequence spans 246 residues: MVTMKDLLECGVHFGHQTRRWNPKTKKFIFGVRKNIHIIDLQKTLRYFRYTYNIVRDASAQGKSIMFVGTKKQANETLKEFAESIQVPYVNYRWLGGMLTNFSTIRKSVRKLEIIEEMENSGQIDLLTKKEKLMILRKKEKLDKYLGGVRHMKKIPDMIFVIDVAKEKIAVAEARKLHIPIVAPLDTNCDPDLVDYPIPGNDDAIRSIRLFCKEMSEAILEGRELMQEEIVHADENSEEIEFVSNE.

The protein belongs to the universal ribosomal protein uS2 family.

This chain is Small ribosomal subunit protein uS2, found in Helicobacter acinonychis (strain Sheeba).